Here is a 323-residue protein sequence, read N- to C-terminus: Syntaxin-42 (323 aa).

Over 1–302 (MATRNRTTVY…QREGAMVKCA (302 aa)) the chain is Cytoplasmic. In terms of domain architecture, t-SNARE coiled-coil homology spans 227–289 (QHVSAERERE…EEGYKQLQKA (63 aa)). A helical; Anchor for type IV membrane protein membrane pass occupies residues 303 to 323 (TILLVLCLIMIVLLILKNILF).

Belongs to the syntaxin family. In terms of assembly, interacts with VTI12 and SYP61 to form a t-SNARE complex and with VPS45. Expressed at low levels in roots, stems, flowers and leaves.

Its subcellular location is the golgi apparatus. The protein localises to the trans-Golgi network membrane. Its function is as follows. Contributes to the regulation of secretory and vacuolar transport pathways in the post-Golgi network, and to the maintenance of the Golgi apparatus and trans-Golgi network (TGN) morphologies. Vesicle trafficking protein that functions in the secretory pathway and mediates liposome fusion. Required for extracellular resistance responses to a fungal pathogen. Also involved in the protection of chloroplasts from salicylic acid-dependent biotic stress. This is Syntaxin-42 from Arabidopsis thaliana (Mouse-ear cress).